The chain runs to 683 residues: Methionine--tRNA ligase (683 aa).

The 'HIGH' region signature appears at 14–24 (PYANGSIHLGH). Residues cysteine 145, cysteine 148, cysteine 158, and cysteine 161 each coordinate Zn(2+). Positions 331–335 (KMSKS) match the 'KMSKS' region motif. Lysine 334 contributes to the ATP binding site. One can recognise a tRNA-binding domain in the interval 581–683 (AFAAVDLRVA…SGAKPGQRIK (103 aa)).

Belongs to the class-I aminoacyl-tRNA synthetase family. MetG type 1 subfamily. In terms of assembly, homodimer. It depends on Zn(2+) as a cofactor.

Its subcellular location is the cytoplasm. The enzyme catalyses tRNA(Met) + L-methionine + ATP = L-methionyl-tRNA(Met) + AMP + diphosphate. Functionally, is required not only for elongation of protein synthesis but also for the initiation of all mRNA translation through initiator tRNA(fMet) aminoacylation. This Pseudomonas fluorescens (strain SBW25) protein is Methionine--tRNA ligase.